A 186-amino-acid chain; its full sequence is Peptidyl-tRNA hydrolase (186 aa).

Tyr14 serves as a coordination point for tRNA. His19 serves as the catalytic Proton acceptor. 3 residues coordinate tRNA: Tyr64, Asn66, and Asn113.

The protein belongs to the PTH family. In terms of assembly, monomer.

It is found in the cytoplasm. The catalysed reaction is an N-acyl-L-alpha-aminoacyl-tRNA + H2O = an N-acyl-L-amino acid + a tRNA + H(+). Hydrolyzes ribosome-free peptidyl-tRNAs (with 1 or more amino acids incorporated), which drop off the ribosome during protein synthesis, or as a result of ribosome stalling. Functionally, catalyzes the release of premature peptidyl moieties from peptidyl-tRNA molecules trapped in stalled 50S ribosomal subunits, and thus maintains levels of free tRNAs and 50S ribosomes. The sequence is that of Peptidyl-tRNA hydrolase from Agathobacter rectalis (strain ATCC 33656 / DSM 3377 / JCM 17463 / KCTC 5835 / VPI 0990) (Eubacterium rectale).